The chain runs to 414 residues: Eukaryotic initiation factor 4A (414 aa).

The short motif at 41–69 is the Q motif element; the sequence is ESFDDMGLQENLLRGIYAYGFEKPSAIQQ. Residues 72 to 242 enclose the Helicase ATP-binding domain; that stretch reads IVPFCKGLDV…RKFMNKPVRI (171 aa). 85–92 provides a ligand contact to ATP; that stretch reads AQSGTGKT. The DEAD box motif lies at 190–193; the sequence is DEAD. One can recognise a Helicase C-terminal domain in the interval 253-414; sequence GIKQFYVNVE…ELPANVADLL (162 aa).

The protein belongs to the DEAD box helicase family. eIF4A subfamily. EIF4F is a multi-subunit complex, the composition of which varies with external and internal environmental conditions. It is composed of at least EIF4A, EIF4E and EIF4G.

The catalysed reaction is ATP + H2O = ADP + phosphate + H(+). ATP-dependent RNA helicase which is a subunit of the eIF4F complex involved in cap recognition and is required for mRNA binding to ribosome. In the current model of translation initiation, eIF4A unwinds RNA secondary structures in the 5'-UTR of mRNAs which is necessary to allow efficient binding of the small ribosomal subunit, and subsequent scanning for the initiator codon. The sequence is that of Eukaryotic initiation factor 4A from Triticum aestivum (Wheat).